Consider the following 208-residue polypeptide: Ribosomal RNA large subunit methyltransferase E (208 aa).

S-adenosyl-L-methionine is bound by residues G63, W65, D83, D99, and D124. The active-site Proton acceptor is the K164.

Belongs to the class I-like SAM-binding methyltransferase superfamily. RNA methyltransferase RlmE family.

It localises to the cytoplasm. It carries out the reaction uridine(2552) in 23S rRNA + S-adenosyl-L-methionine = 2'-O-methyluridine(2552) in 23S rRNA + S-adenosyl-L-homocysteine + H(+). Specifically methylates the uridine in position 2552 of 23S rRNA at the 2'-O position of the ribose in the fully assembled 50S ribosomal subunit. This is Ribosomal RNA large subunit methyltransferase E from Blochmanniella pennsylvanica (strain BPEN).